We begin with the raw amino-acid sequence, 187 residues long: Nicotinamide-nucleotide adenylyltransferase (187 aa).

The protein belongs to the archaeal NMN adenylyltransferase family.

The protein localises to the cytoplasm. The catalysed reaction is beta-nicotinamide D-ribonucleotide + ATP + H(+) = diphosphate + NAD(+). It participates in cofactor biosynthesis; NAD(+) biosynthesis; NAD(+) from nicotinamide D-ribonucleotide: step 1/1. In Thermococcus onnurineus (strain NA1), this protein is Nicotinamide-nucleotide adenylyltransferase.